Here is a 660-residue protein sequence, read N- to C-terminus: Kinesin-like protein KIF2A (660 aa).

Positions Met-1–Gln-140 are disordered. The tract at residues Met-1–Asp-171 is globular. Ser-48 bears the Phosphoserine mark. Phosphothreonine is present on residues Thr-51 and Thr-70. The residue at position 73 (Ser-73) is a Phosphoserine. Residue Lys-75 is modified to N6-acetyllysine. Residues Leu-96–Asn-106 are compositionally biased toward polar residues. Positions Cys-113–Gln-140 are enriched in basic and acidic residues. Residues Arg-177–Leu-507 form the Kinesin motor domain. Gly-267–Thr-274 serves as a coordination point for ATP. Residues Ala-614–Asn-653 are a coiled coil.

The protein belongs to the TRAFAC class myosin-kinesin ATPase superfamily. Kinesin family. MCAK/KIF2 subfamily. In terms of assembly, interacts with AURKA and PLK1. Interacts with PSRC1. Interacts with MCRS1; the interaction enhances recruitment of KIF2A to the minus ends of spindle microtubules which promotes chromosome alignment.

The protein resides in the cytoplasm. It localises to the cytoskeleton. The protein localises to the microtubule organizing center. It is found in the centrosome. Its subcellular location is the spindle pole. The protein resides in the spindle. Its function is as follows. Plus end-directed microtubule-dependent motor required for normal brain development. May regulate microtubule dynamics during axonal growth. Required for normal progression through mitosis. Required for normal congress of chromosomes at the metaphase plate. Required for normal spindle dynamics during mitosis. Promotes spindle turnover. Implicated in formation of bipolar mitotic spindles. Has microtubule depolymerization activity. This chain is Kinesin-like protein KIF2A (KIF2A), found in Bos taurus (Bovine).